The chain runs to 369 residues: MKFIDEAKIEVIAGDGGNGVASFCREKFRPFGGPDGGDGGKGGSIWAVADRNINTLVDFRYSKMHKARDGENGRGADCYGKGADDIKLRMPVGTLIIDNNDGELIADLTEHGQEVLIAKGGEGGWGNIHFKSSTNRAPRQKSEGKEGERRELRLELKVLADIGLLGMPNAGKSTFISAVSNARPKIADYPFTTLHPNLGVVRVSHEKSFVIADIPGLIEGASDGAGLGIQFLRHLQRTRLLLHIVDLAPFDNVDPVKEAKAIVKELKKYDESLFDKPRWLVLNKLDMVPEEERKKRVKDFIKRFGWKGPVFEISALTHEGCSELVTEIYDYIAVQRQAEQRSEETPQMVEAARGIDSIDPDDPRFKIID.

An Obg domain is found at Met-1–Leu-159. Positions Ile-128–Glu-148 are disordered. The region spanning Ala-160–Ala-333 is the OBG-type G domain. Residues Gly-166–Ser-173, Phe-191–His-195, Asp-213–Gly-216, Asn-283–Asp-286, and Ser-314–Leu-316 contribute to the GTP site. Residues Ser-173 and Thr-193 each contribute to the Mg(2+) site.

Belongs to the TRAFAC class OBG-HflX-like GTPase superfamily. OBG GTPase family. As to quaternary structure, monomer. Requires Mg(2+) as cofactor.

It localises to the cytoplasm. An essential GTPase which binds GTP, GDP and possibly (p)ppGpp with moderate affinity, with high nucleotide exchange rates and a fairly low GTP hydrolysis rate. Plays a role in control of the cell cycle, stress response, ribosome biogenesis and in those bacteria that undergo differentiation, in morphogenesis control. In Herminiimonas arsenicoxydans, this protein is GTPase Obg.